A 301-amino-acid chain; its full sequence is Thioredoxin-related transmembrane protein 2-A (301 aa).

Residues 1-19 (MSLIRGLISTIYYLPKIYK) form the signal peptide. Residues 20–111 (WFYRPYYFLS…VVLFFRVDLR (92 aa)) lie on the Extracellular side of the membrane. Residues 112–132 (FGLLYLTLCVVFLITCKPPAY) traverse the membrane as a helical segment. Positions 122-269 (VFLITCKPPA…IFQKYKKFSK (148 aa)) constitute a Thioredoxin domain. At 133-301 (MGPENIKYFR…EEDSESKKDK (169 aa)) the chain is on the cytoplasmic side. Positions 268–301 (SKGEKPEEPQPVLEEESESPLEEEEEDSESKKDK) are disordered. The span at 280 to 295 (LEEESESPLEEEEEDS) shows a compositional bias: acidic residues. Positions 298–301 (KKDK) match the Di-lysine motif motif.

In terms of assembly, monomer. Homodimer; disulfide-linked. Occurs in both reduced and oxidized monomeric form. Oxidative conditions increase homodimerization.

The protein resides in the endoplasmic reticulum membrane. It localises to the mitochondrion membrane. Functionally, endoplasmic reticulum and mitochondria-associated protein that probably functions as a regulator of cellular redox state and thereby regulates protein post-translational modification, protein folding and mitochondrial activity. This Danio rerio (Zebrafish) protein is Thioredoxin-related transmembrane protein 2-A.